A 458-amino-acid chain; its full sequence is Phosphoglucosamine mutase (458 aa).

Ser-106 functions as the Phosphoserine intermediate in the catalytic mechanism. Positions 106, 247, 249, and 251 each coordinate Mg(2+). Residue Ser-106 is modified to Phosphoserine.

Belongs to the phosphohexose mutase family. Mg(2+) serves as cofactor. Post-translationally, activated by phosphorylation.

It carries out the reaction alpha-D-glucosamine 1-phosphate = D-glucosamine 6-phosphate. Functionally, catalyzes the conversion of glucosamine-6-phosphate to glucosamine-1-phosphate. The polypeptide is Phosphoglucosamine mutase (Chlamydia trachomatis serovar L2 (strain ATCC VR-902B / DSM 19102 / 434/Bu)).